Consider the following 287-residue polypeptide: Ribosomal RNA small subunit methyltransferase A (287 aa).

Positions 28, 30, 55, 77, 103, and 123 each coordinate S-adenosyl-L-methionine.

The protein belongs to the class I-like SAM-binding methyltransferase superfamily. rRNA adenine N(6)-methyltransferase family. RsmA subfamily.

Its subcellular location is the cytoplasm. It carries out the reaction adenosine(1518)/adenosine(1519) in 16S rRNA + 4 S-adenosyl-L-methionine = N(6)-dimethyladenosine(1518)/N(6)-dimethyladenosine(1519) in 16S rRNA + 4 S-adenosyl-L-homocysteine + 4 H(+). Functionally, specifically dimethylates two adjacent adenosines (A1518 and A1519) in the loop of a conserved hairpin near the 3'-end of 16S rRNA in the 30S particle. May play a critical role in biogenesis of 30S subunits. The polypeptide is Ribosomal RNA small subunit methyltransferase A (Nitrobacter winogradskyi (strain ATCC 25391 / DSM 10237 / CIP 104748 / NCIMB 11846 / Nb-255)).